We begin with the raw amino-acid sequence, 180 residues long: Oligoribonuclease (180 aa).

The Exonuclease domain maps to 7-170 (LIWIDLEMTG…SDIQDSIDEL (164 aa)). The active site involves Y128.

Belongs to the oligoribonuclease family.

The protein resides in the cytoplasm. Its function is as follows. 3'-to-5' exoribonuclease specific for small oligoribonucleotides. The polypeptide is Oligoribonuclease (Ruthia magnifica subsp. Calyptogena magnifica).